Reading from the N-terminus, the 247-residue chain is F-box and leucine-rich protein 22 (247 aa).

Positions 6 to 52 constitute an F-box domain; sequence TMHITQLNRECLLHLFSFLDKDSRKSLARTCSQLHDVFEDPALWSLL. Disordered stretches follow at residues 124–154 and 173–247; these read SPRRREAPAPSSGTPIAVGPKSPRWGGPDHS and GLGS…AFPQ. The span at 184–200 shows a compositional bias: pro residues; it reads ETPPAPGVSWGPPPPGA.

As to quaternary structure, directly interacts with SKP1 and CUL1. Enriched in cardiac muscle.

It localises to the cytoplasm. It is found in the myofibril. The protein localises to the sarcomere. Its subcellular location is the z line. The protein operates within protein modification; protein ubiquitination. Substrate-recognition component of the SCF (SKP1-CUL1-F-box protein)-type E3 ubiquitin ligase complex. Promotes ubiquitination of sarcomeric proteins alpha-actinin-2 (ACTN2) and filamin-C (FLNC). The protein is F-box and leucine-rich protein 22 (FBXL22) of Homo sapiens (Human).